The sequence spans 416 residues: Neamine transaminase NeoN (416 aa).

K231 carries the post-translational modification N6-(pyridoxal phosphate)lysine.

The protein belongs to the class-III pyridoxal-phosphate-dependent aminotransferase family. It depends on pyridoxal 5'-phosphate as a cofactor.

It carries out the reaction neomycin C + 2-oxoglutarate = 6'''-deamino-6'''-oxoneomycin C + L-glutamate. The catalysed reaction is neamine + 2-oxoglutarate = 6'-oxoparomamine + L-glutamate. It functions in the pathway antibiotic biosynthesis; neomycin biosynthesis. Functionally, 6'-oxoglucosaminyl:L-glutamate aminotransferase that catalyzes pyridoxal-5'-phosphate-mediated transamination for the conversion of paromamine to neamine in the biosynthetic pathway of neomycin. Also able to catalyze deamination at C-6''' of neomycin. The sequence is that of Neamine transaminase NeoN (neoN) from Streptomyces fradiae (Streptomyces roseoflavus).